We begin with the raw amino-acid sequence, 555 residues long: MTTARPVKTRNEGQWALGDREPLNDTEKIKLADGPLNVRERIINVYAKQGFDSIDKSDLRGRFRWMGLYTQREQGYDGSWTGDDNTDKIEAKYFMMRVRSDGKAMSAHTMRTLGQISTEFARDTADISDRENLQLHWIRIEDVPEIWRRLESVGLQTTEACGDCPRGIHGSPLAGDSLDEVLDPSPAIEEIVRRSLNNPEYANLPRKYKTAVSGLQDVSHETHDVAFVGVEHPEHGPGLDLWVGGGLSTNPMLAQRLSVWVPLDEVPDVWEAVTQLFRDYGYRRLRAKARLKFLVKDWGIEKFREILEQEYLNRRLIDGPAPAPVKHTIDHVGVQKIKNGLNAVGVAPIAGRVSGTTLSAVADLMEQVGSDRARWTPFQKLVILDVPDDKVDELVTGLDALGLPSRPSSWRKNTMACTGIEFCKLSFAETRVRTQTLVPELERRLADVDAQLDAPISVHLNGCPNSCARIQVADIGFKGQWIDNGDGTSVEGFQVHLGGGLGEQSGFGRKLRQHKVTSEELGDYIDRVTRKYLEGRNDGETFASWALRADEEELR.

The 3'-(S-cysteinyl)-tyrosine (Tyr-Cys) cross-link spans 69-161 (YTQREQGYDG…SVGLQTTEAC (93 aa)). Residues Cys-417, Cys-423, Cys-463, and Cys-467 each contribute to the [4Fe-4S] cluster site. Position 467 (Cys-467) interacts with siroheme.

This sequence belongs to the nitrite and sulfite reductase 4Fe-4S domain family. As to quaternary structure, monomer. It depends on siroheme as a cofactor. [4Fe-4S] cluster serves as cofactor.

The enzyme catalyses hydrogen sulfide + 6 oxidized [2Fe-2S]-[ferredoxin] + 3 H2O = sulfite + 6 reduced [2Fe-2S]-[ferredoxin] + 7 H(+). In terms of biological role, catalyzes the reduction of sulfite to sulfide, a step in the biosynthesis of sulfur-containing amino acids and cofactors. In Mycolicibacterium paratuberculosis (strain ATCC BAA-968 / K-10) (Mycobacterium paratuberculosis), this protein is Sulfite reductase [ferredoxin] 1 (sir1).